Here is an 80-residue protein sequence, read N- to C-terminus: Bowman-Birk type proteinase inhibitor (80 aa).

Intrachain disulfides connect Cys19–Cys70, Cys20–Cys35, Cys23–Cys66, Cys25–Cys33, Cys41–Cys47, Cys44–Cys59, and Cys49–Cys57.

Occurs as a monomer, dimer or trimer. The dimer may be the active form. In terms of processing, binds calcium, probably through His-3 to His-6.

In terms of biological role, protease inhibitor with activity against cysteine, aspartic and serine proteases. Highest activity against serine proteases, in particular trypsin and trypsin-like proteases. This chain is Bowman-Birk type proteinase inhibitor, found in Phaseolus acutifolius (Tepary bean).